A 1412-amino-acid chain; its full sequence is Ecdysone-induced protein 75B, isoform B (1412 aa).

Residues 1-14 (MEAVQAAAAATSSG) are compositionally biased toward low complexity. Disordered stretches follow at residues 1–96 (MEAV…PGGT), 110–204 (QRAT…QQHV), 258–298 (QYQQ…VPPP), and 321–448 (HFQQ…SIPD). Over residues 15-25 (GSSGSVPGSGS) the composition is skewed to gly residues. The segment covering 32-57 (IKTEPIDFEMLHLEENERQQDIEREP) has biased composition (basic and acidic residues). Residues 58-68 (SSSNSNSNSNS) are compositionally biased toward low complexity. Residues 69–81 (LTPQRYTHVQVQT) are compositionally biased toward polar residues. Residues 87 to 96 (PTGLTTPGGT) are compositionally biased toward low complexity. Positions 124-133 (YSQQQGTAAS) are enriched in polar residues. The span at 135-150 (SAPPETTALLTTTSGT) shows a compositional bias: low complexity. Polar residues predominate over residues 151–164 (PQIIITRTLPSNQH). A compositionally biased stretch (low complexity) spans 177–203 (HHYQQQQPQRQQSPPPLHHQQQQQQQH). A compositionally biased stretch (pro residues) spans 266–284 (PLAPPPPPPPPPPPPPPPQ). 3 stretches are compositionally biased toward low complexity: residues 323-371 (QQQQ…SSHI), 378-403 (SSSS…NSVM), and 417-447 (ASSS…SSIP). Residues 455–531 (TVLCRVCGDK…VGMSRDAVRF (77 aa)) constitute a DNA-binding region (nuclear receptor). NR C4-type zinc fingers lie at residues 458-478 (CRVC…CEGC) and 495-514 (CTKN…CQYC). One can recognise an NR LBD domain in the interval 565–813 (DQPRLLAAVL…QQMWSMEDGN (249 aa)). Disordered stretches follow at residues 837-878 (KSPL…SALA), 984-1021 (LDSP…SVDD), 1044-1064 (VSVS…KRQI), 1108-1174 (AEAD…SSHS), 1204-1317 (ENST…SNSA), and 1368-1401 (VTVT…NPGL). Low complexity-rich tracts occupy residues 854–866 (GSPS…GVSL), 1005–1017 (SSGG…SPRS), 1044–1058 (VSVS…STSS), 1110–1155 (ADAS…AQSQ), and 1163–1174 (SSPKASMASSHS). 2 stretches are compositionally biased toward polar residues: residues 1206-1219 (STAA…VGNR) and 1231-1253 (AVQN…QRQQ). Low complexity-rich tracts occupy residues 1254 to 1290 (SVSP…SASS), 1299 to 1317 (STSN…SNSA), and 1372 to 1400 (ASNG…PNPG).

This sequence belongs to the nuclear hormone receptor family. NR1 subfamily.

It localises to the nucleus. Its function is as follows. Implicated in the regulation of ecdysone-triggered gene hierarchies. Probably plays a key role in mediating the regulation of the larval molt by 20-OH-ecdysone. The chain is Ecdysone-induced protein 75B, isoform B (Eip75B) from Drosophila melanogaster (Fruit fly).